The following is a 550-amino-acid chain: Pectinesterase 2.1 (550 aa).

Asn-179 carries N-linked (GlcNAc...) asparagine glycosylation. Residues Thr-312 and Gln-342 each coordinate substrate. Residues Cys-331 and Cys-358 are joined by a disulfide bond. Asp-365 (proton donor) is an active-site residue. Residue Asp-386 is the Nucleophile of the active site. An intrachain disulfide couples Cys-399 to Cys-433. The substrate site is built by Arg-454 and Trp-456.

The protein in the N-terminal section; belongs to the PMEI family. This sequence in the C-terminal section; belongs to the pectinesterase family.

It localises to the secreted. The protein localises to the cell wall. It carries out the reaction [(1-&gt;4)-alpha-D-galacturonosyl methyl ester](n) + n H2O = [(1-&gt;4)-alpha-D-galacturonosyl](n) + n methanol + n H(+). Its pathway is glycan metabolism; pectin degradation; 2-dehydro-3-deoxy-D-gluconate from pectin: step 1/5. Its function is as follows. Pectinesterase may play a role in cell wall metabolism during fruit growth and development prior to ripening and may be required for preparing cell walls for softening by polygalacturonase during fruit ripening. In Solanum lycopersicum (Tomato), this protein is Pectinesterase 2.1 (PME2.1).